The primary structure comprises 644 residues: Pentatricopeptide repeat-containing protein At1g12775, mitochondrial (644 aa).

The transit peptide at 1–53 (MVRMMIRRLSSQASRFVQPRLLETGTLRIALINCPNELLFCCERGFSTFSDRN) directs the protein to the mitochondrion. PPR repeat units lie at residues 87–121 (TVID…GIAH), 122–156 (SIYT…GYEP), 157–191 (DTVI…GHKP), 192–226 (TLIT…GFQP), 227–261 (NEVT…NIKL), 262–296 (DAVK…GFKA), 297–331 (DIIT…KISP), 332–366 (NVVT…GIAP), 367–401 (NTIT…GCDP), 402–436 (DIMT…GVIA), 437–471 (NTVT…RVRP), 472–506 (DIVS…KMEL), 507–541 (DIGI…GVKL), 542–576 (DARA…GHAP), and 577–611 (DELT…GFPA).

Belongs to the PPR family. P subfamily.

Its subcellular location is the mitochondrion. The polypeptide is Pentatricopeptide repeat-containing protein At1g12775, mitochondrial (Arabidopsis thaliana (Mouse-ear cress)).